We begin with the raw amino-acid sequence, 331 residues long: Ketol-acid reductoisomerase (NADP(+)) (331 aa).

The KARI N-terminal Rossmann domain occupies 2–181 (TKVYYEDAVK…GATRAGVIET (180 aa)). NADP(+)-binding positions include 25–28 (YGSQ), arginine 48, serine 52, and 82–85 (DETQ). Histidine 107 is a catalytic residue. Glycine 133 is a binding site for NADP(+). A KARI C-terminal knotted domain is found at 182–327 (TFKEETETDL…AELREMMPFV (146 aa)). Aspartate 190, glutamate 194, glutamate 226, and glutamate 230 together coordinate Mg(2+). Serine 251 contacts substrate.

It belongs to the ketol-acid reductoisomerase family. It depends on Mg(2+) as a cofactor.

The enzyme catalyses (2R)-2,3-dihydroxy-3-methylbutanoate + NADP(+) = (2S)-2-acetolactate + NADPH + H(+). The catalysed reaction is (2R,3R)-2,3-dihydroxy-3-methylpentanoate + NADP(+) = (S)-2-ethyl-2-hydroxy-3-oxobutanoate + NADPH + H(+). It functions in the pathway amino-acid biosynthesis; L-isoleucine biosynthesis; L-isoleucine from 2-oxobutanoate: step 2/4. It participates in amino-acid biosynthesis; L-valine biosynthesis; L-valine from pyruvate: step 2/4. Its function is as follows. Involved in the biosynthesis of branched-chain amino acids (BCAA). Catalyzes an alkyl-migration followed by a ketol-acid reduction of (S)-2-acetolactate (S2AL) to yield (R)-2,3-dihydroxy-isovalerate. In the isomerase reaction, S2AL is rearranged via a Mg-dependent methyl migration to produce 3-hydroxy-3-methyl-2-ketobutyrate (HMKB). In the reductase reaction, this 2-ketoacid undergoes a metal-dependent reduction by NADPH to yield (R)-2,3-dihydroxy-isovalerate. This Listeria innocua serovar 6a (strain ATCC BAA-680 / CLIP 11262) protein is Ketol-acid reductoisomerase (NADP(+)).